The chain runs to 221 residues: uncharacterized protein (221 aa).

The segment at residues 77 to 96 is a DNA-binding region (H-T-H motif); it reads YRERAVELGVPERAILVEPN.

It to E.coli YdcF.

In terms of biological role, the imp locus inhibits the extrachromosomal maintenance of the streptomyces plasmid SLP1. May function as a transcriptional activator. This is an uncharacterized protein from Streptomyces coelicolor (strain ATCC BAA-471 / A3(2) / M145).